Consider the following 142-residue polypeptide: Immunoglobulin iota chain (142 aa).

The signal sequence occupies residues 1 to 19; it reads MAWTSVLLMLLAYLTGCGP. The tract at residues 20–41 is framework-1; it reads QPMVHQPPLASSSLGATIRLSC. A disulfide bridge connects residues Cys-41 and Cys-115. The interval 42–56 is complementarity-determining-1; it reads TLSNDHNIGIYSIYW. A framework-2 region spans residues 57 to 70; sequence YQQRPGHPPRFLLR. The segment at 71–81 is complementarity-determining-2; sequence YFSHSDKHQGP. Positions 82-115 are framework-3; sequence DIPPRFSGSKDTTRNLGYLSISELQPEDEAVYYC.

Belongs to the immunoglobulin superfamily. In terms of assembly, interacts with IGLL1. Interacts with SYNV1/HRD1 (via N-terminus); this interaction leads to increased VPREB1A ubiquitination and degradation in pre-B cells, possibly through a lysosomal, not proteasomal, pathway. In terms of tissue distribution, only expressed by pre-B-cells.

It is found in the endoplasmic reticulum. Associates with the Ig-mu chain to form a molecular complex that is expressed on the surface of pre-B-cells. This complex presumably regulates Ig gene rearrangements in the early steps of B-cell differentiation. The polypeptide is Immunoglobulin iota chain (Mus musculus (Mouse)).